The chain runs to 175 residues: FOXL2 neighbor protein (175 aa).

Disordered stretches follow at residues 1–39 (MTRTPVGSARTRPKPRKLGPQRGKALQASSRLSESPALV) and 70–100 (AQKTGPGILQQRQKPPAPRASGGPALLGKRR).

The protein is FOXL2 neighbor protein (FOXL2NB) of Homo sapiens (Human).